Consider the following 331-residue polypeptide: Thiamine thiazole synthase (331 aa).

Residues Cys-86, 107-108 (EA), Gly-115, and Val-183 each bind substrate. Cys-220 bears the 2,3-didehydroalanine (Cys) mark. Substrate contacts are provided by residues Asp-222, His-237, Met-289, and 299 to 301 (RMG).

It belongs to the THI4 family. As to quaternary structure, homooctamer. Fe cation serves as cofactor. In terms of processing, during the catalytic reaction, a sulfide is transferred from Cys-220 to a reaction intermediate, generating a dehydroalanine residue.

It localises to the cytoplasm. Its subcellular location is the nucleus. The enzyme catalyses [ADP-thiazole synthase]-L-cysteine + glycine + NAD(+) = [ADP-thiazole synthase]-dehydroalanine + ADP-5-ethyl-4-methylthiazole-2-carboxylate + nicotinamide + 3 H2O + 2 H(+). Its function is as follows. Involved in biosynthesis of the thiamine precursor thiazole. Catalyzes the conversion of NAD and glycine to adenosine diphosphate 5-(2-hydroxyethyl)-4-methylthiazole-2-carboxylic acid (ADT), an adenylated thiazole intermediate. The reaction includes an iron-dependent sulfide transfer from a conserved cysteine residue of the protein to a thiazole intermediate. The enzyme can only undergo a single turnover, which suggests it is a suicide enzyme. May have additional roles in adaptation to various stress conditions and in DNA damage tolerance. The chain is Thiamine thiazole synthase from Emericella nidulans (strain FGSC A4 / ATCC 38163 / CBS 112.46 / NRRL 194 / M139) (Aspergillus nidulans).